A 210-amino-acid chain; its full sequence is Urease accessory protein UreF (210 aa).

Belongs to the UreF family. In terms of assembly, ureD, UreF and UreG form a complex that acts as a GTP-hydrolysis-dependent molecular chaperone, activating the urease apoprotein by helping to assemble the nickel containing metallocenter of UreC. The UreE protein probably delivers the nickel.

It is found in the cytoplasm. Required for maturation of urease via the functional incorporation of the urease nickel metallocenter. The chain is Urease accessory protein UreF from Cereibacter sphaeroides (strain ATCC 17029 / ATH 2.4.9) (Rhodobacter sphaeroides).